A 405-amino-acid chain; its full sequence is Cystathionine gamma-lyase (405 aa).

Arg-62, Tyr-114, and Arg-119 together coordinate substrate. At Lys-212 the chain carries N6-(pyridoxal phosphate)lysine. Position 339 (Glu-339) interacts with substrate.

Belongs to the trans-sulfuration enzymes family. As to quaternary structure, homotetramer. Interacts with CALM in a calcium-dependent manner. Requires pyridoxal 5'-phosphate as cofactor.

The protein localises to the cytoplasm. It catalyses the reaction L,L-cystathionine + H2O = 2-oxobutanoate + L-cysteine + NH4(+). Its pathway is amino-acid biosynthesis; L-cysteine biosynthesis; L-cysteine from L-homocysteine and L-serine: step 2/2. In terms of biological role, catalyzes the last step in the trans-sulfuration pathway from methionine to cysteine. Has broad substrate specificity. Converts cystathionine to cysteine, ammonia and 2-oxobutanoate. Converts two cysteine molecules to lanthionine and hydrogen sulfide. Can also accept homocysteine as substrate. Specificity depends on the levels of the endogenous substrates. Generates the endogenous signaling molecule hydrogen sulfide (H2S), and so contributes to the regulation of blood pressure. Acts as a cysteine-protein sulfhydrase by mediating sulfhydration of target proteins: sulfhydration consists of converting -SH groups into -SSH on specific cysteine residues of target proteins such as GAPDH, PTPN1 and NF-kappa-B subunit RELA, thereby regulating their function. The protein is Cystathionine gamma-lyase (CTH) of Bos taurus (Bovine).